A 139-amino-acid chain; its full sequence is Putative nickel-responsive regulator (139 aa).

4 residues coordinate Ni(2+): histidine 79, histidine 90, histidine 92, and cysteine 98.

The protein belongs to the transcriptional regulatory CopG/NikR family. It depends on Ni(2+) as a cofactor.

In terms of biological role, transcriptional regulator. In Geobacter metallireducens (strain ATCC 53774 / DSM 7210 / GS-15), this protein is Putative nickel-responsive regulator.